The following is a 254-amino-acid chain: NAD kinase (254 aa).

The active-site Proton acceptor is Asp44. NAD(+) is bound by residues 44 to 45, 114 to 115, Asp144, Ala152, 155 to 160, and Ala179; these read DG, NE, and TAYNYS.

This sequence belongs to the NAD kinase family. Requires a divalent metal cation as cofactor.

It is found in the cytoplasm. The catalysed reaction is NAD(+) + ATP = ADP + NADP(+) + H(+). Involved in the regulation of the intracellular balance of NAD and NADP, and is a key enzyme in the biosynthesis of NADP. Catalyzes specifically the phosphorylation on 2'-hydroxyl of the adenosine moiety of NAD to yield NADP. This is NAD kinase from Cereibacter sphaeroides (strain ATCC 17025 / ATH 2.4.3) (Rhodobacter sphaeroides).